The primary structure comprises 229 residues: Enolase-phosphatase E1 (229 aa).

A disordered region spans residues 207–229 (RDPASHHPQVQRFDDIHPEQIPA). Over residues 218-229 (RFDDIHPEQIPA) the composition is skewed to basic and acidic residues.

The protein belongs to the HAD-like hydrolase superfamily. MasA/MtnC family. In terms of assembly, monomer. The cofactor is Mg(2+).

It catalyses the reaction 5-methylsulfanyl-2,3-dioxopentyl phosphate + H2O = 1,2-dihydroxy-5-(methylsulfanyl)pent-1-en-3-one + phosphate. It participates in amino-acid biosynthesis; L-methionine biosynthesis via salvage pathway; L-methionine from S-methyl-5-thio-alpha-D-ribose 1-phosphate: step 3/6. Its pathway is amino-acid biosynthesis; L-methionine biosynthesis via salvage pathway; L-methionine from S-methyl-5-thio-alpha-D-ribose 1-phosphate: step 4/6. In terms of biological role, bifunctional enzyme that catalyzes the enolization of 2,3-diketo-5-methylthiopentyl-1-phosphate (DK-MTP-1-P) into the intermediate 2-hydroxy-3-keto-5-methylthiopentenyl-1-phosphate (HK-MTPenyl-1-P), which is then dephosphorylated to form the acireductone 1,2-dihydroxy-3-keto-5-methylthiopentene (DHK-MTPene). The sequence is that of Enolase-phosphatase E1 from Klebsiella pneumoniae (strain 342).